Consider the following 432-residue polypeptide: 3-phosphoshikimate 1-carboxyvinyltransferase (432 aa).

3 residues coordinate 3-phosphoshikimate: Lys-23, Ser-24, and Arg-28. Residue Lys-23 participates in phosphoenolpyruvate binding. 2 residues coordinate phosphoenolpyruvate: Gly-95 and Arg-123. 3-phosphoshikimate is bound by residues Ser-167, Gln-169, Asp-317, and Lys-344. Gln-169 lines the phosphoenolpyruvate pocket. Asp-317 acts as the Proton acceptor in catalysis. 2 residues coordinate phosphoenolpyruvate: Arg-348 and Arg-390.

Belongs to the EPSP synthase family. Monomer.

The protein localises to the cytoplasm. It catalyses the reaction 3-phosphoshikimate + phosphoenolpyruvate = 5-O-(1-carboxyvinyl)-3-phosphoshikimate + phosphate. It participates in metabolic intermediate biosynthesis; chorismate biosynthesis; chorismate from D-erythrose 4-phosphate and phosphoenolpyruvate: step 6/7. Catalyzes the transfer of the enolpyruvyl moiety of phosphoenolpyruvate (PEP) to the 5-hydroxyl of shikimate-3-phosphate (S3P) to produce enolpyruvyl shikimate-3-phosphate and inorganic phosphate. The chain is 3-phosphoshikimate 1-carboxyvinyltransferase from Staphylococcus aureus (strain bovine RF122 / ET3-1).